Consider the following 267-residue polypeptide: Acryloyl-CoA reductase electron transfer subunit gamma (267 aa).

As to quaternary structure, heterohexadecamer; tetramer of tetramers. Each tetramer is composed of 2 alpha (AcrC), a beta (AcrA) and a gamma (AcrB) subunit.

The protein localises to the cytoplasm. Its function is as follows. Part of the ETF-acryloyl-CoA reductase complex involved in the pathway of L-alanine fermentation. The electron transfer flavoprotein (ETF) serves as a specific electron acceptor for acryloyl-CoA reductase. The protein is Acryloyl-CoA reductase electron transfer subunit gamma (acrB) of Anaerotignum propionicum (Clostridium propionicum).